Consider the following 122-residue polypeptide: Large ribosomal subunit protein uL14 (122 aa).

This sequence belongs to the universal ribosomal protein uL14 family. In terms of assembly, part of the 50S ribosomal subunit. Forms a cluster with proteins L3 and L19. In the 70S ribosome, L14 and L19 interact and together make contacts with the 16S rRNA in bridges B5 and B8.

Functionally, binds to 23S rRNA. Forms part of two intersubunit bridges in the 70S ribosome. The protein is Large ribosomal subunit protein uL14 of Desulforudis audaxviator (strain MP104C).